Here is a 360-residue protein sequence, read N- to C-terminus: Photosystem II protein D1 (360 aa).

Helical transmembrane passes span 29–46 (YIGWFGCLMIPTLLTAAS), 118–133 (HFLIGVACWMGREWEL), and 142–156 (WIFVAFSAPVAAASA). Residue H118 coordinates chlorophyll a. A pheophytin a-binding site is contributed by W126. [CaMn4O5] cluster contacts are provided by D170 and E189. The chain crosses the membrane as a helical span at residues 197-218 (FHMAGVAGVFGGSLFSAMHGSL). Residue H198 coordinates chlorophyll a. Residues H215 and 264 to 265 (SF) contribute to the a quinone site. Position 215 (H215) interacts with Fe cation. H272 lines the Fe cation pocket. A helical transmembrane segment spans residues 274–288 (FLAAWPVVGIWLTAL). Residues H332, E333, D342, and A344 each coordinate [CaMn4O5] cluster. Positions 345 to 360 (SNEILPVAISAPSVVG) are excised as a propeptide.

The protein belongs to the reaction center PufL/M/PsbA/D family. PSII is composed of 1 copy each of membrane proteins PsbA, PsbB, PsbC, PsbD, PsbE, PsbF, PsbH, PsbI, PsbJ, PsbK, PsbL, PsbM, PsbT, PsbX, PsbY, PsbZ, Psb30/Ycf12, at least 3 peripheral proteins of the oxygen-evolving complex and a large number of cofactors. It forms dimeric complexes. Requires The D1/D2 heterodimer binds P680, chlorophylls that are the primary electron donor of PSII, and subsequent electron acceptors. It shares a non-heme iron and each subunit binds pheophytin, quinone, additional chlorophylls, carotenoids and lipids. D1 provides most of the ligands for the Mn4-Ca-O5 cluster of the oxygen-evolving complex (OEC). There is also a Cl(-1) ion associated with D1 and D2, which is required for oxygen evolution. The PSII complex binds additional chlorophylls, carotenoids and specific lipids. as cofactor. In terms of processing, tyr-161 forms a radical intermediate that is referred to as redox-active TyrZ, YZ or Y-Z. C-terminally processed by CTPA; processing is essential to allow assembly of the oxygen-evolving complex and thus photosynthetic growth.

Its subcellular location is the plastid. The protein resides in the chloroplast thylakoid membrane. The catalysed reaction is 2 a plastoquinone + 4 hnu + 2 H2O = 2 a plastoquinol + O2. Functionally, photosystem II (PSII) is a light-driven water:plastoquinone oxidoreductase that uses light energy to abstract electrons from H(2)O, generating O(2) and a proton gradient subsequently used for ATP formation. It consists of a core antenna complex that captures photons, and an electron transfer chain that converts photonic excitation into a charge separation. The D1/D2 (PsbA/PsbD) reaction center heterodimer binds P680, the primary electron donor of PSII as well as several subsequent electron acceptors. In Ectocarpus siliculosus (Brown alga), this protein is Photosystem II protein D1.